The chain runs to 487 residues: Acetyl-coenzyme A carboxylase carboxyl transferase subunit beta, chloroplastic (487 aa).

A CoA carboxyltransferase N-terminal domain is found at 223-487 (LWIQCDNCYG…FCPLNKTEIK (265 aa)). Residues Cys-227, Cys-230, Cys-243, and Cys-246 each contribute to the Zn(2+) site. The C4-type zinc-finger motif lies at 227-246 (CDNCYGLMYKKVKMNVCEQC).

The protein belongs to the AccD/PCCB family. As to quaternary structure, acetyl-CoA carboxylase is a heterohexamer composed of biotin carboxyl carrier protein, biotin carboxylase and 2 subunits each of ACCase subunit alpha and ACCase plastid-coded subunit beta (accD). The cofactor is Zn(2+).

Its subcellular location is the plastid. The protein localises to the chloroplast stroma. The catalysed reaction is N(6)-carboxybiotinyl-L-lysyl-[protein] + acetyl-CoA = N(6)-biotinyl-L-lysyl-[protein] + malonyl-CoA. It participates in lipid metabolism; malonyl-CoA biosynthesis; malonyl-CoA from acetyl-CoA: step 1/1. Component of the acetyl coenzyme A carboxylase (ACC) complex. Biotin carboxylase (BC) catalyzes the carboxylation of biotin on its carrier protein (BCCP) and then the CO(2) group is transferred by the transcarboxylase to acetyl-CoA to form malonyl-CoA. This Nasturtium officinale (Watercress) protein is Acetyl-coenzyme A carboxylase carboxyl transferase subunit beta, chloroplastic.